The chain runs to 423 residues: MIDPKLLRNNIEAVNLALAKRGVQLDPTEWASLEVRRKELQSKTESLQAERNAGAKQVGQIKKAGGDASEIMTRMQAIGDEIKAAEVALAELQAEIEQKALSIPNLPDESVPEGKDENDNVEISKWGTPRQFDFEIKDHTDLGEWMGGLEFETATKLTGSRFSVLKGPLARLQRALTQFMLDTHTLKNGYTEAYVPYLVNADSLRGTGQLPKFEEDLFKLQGEKEYYLIPTAEVPVTNFVRDEIIDAERLPLKYAAHTPCFRSEAGSYGRDTRGLIRQHQFDKVEMVQIVKPEDSMQALEELTGHAEGILQALGLPYRKILLCGGDMGFGSTKTYDLEVWVPSQNTYREISSCSNMGDFQARRMMARYRTDQKKTELVHTLNGSGLAVGRTLLAVMENYQRADGAIEVPEVLRPYMGGATYID.

An L-serine-binding site is contributed by 231-233 (TAE). 262–264 (RSE) lines the ATP pocket. L-serine is bound at residue glutamate 285. Residue 349-352 (EISS) participates in ATP binding. Serine 384 contributes to the L-serine binding site.

Belongs to the class-II aminoacyl-tRNA synthetase family. Type-1 seryl-tRNA synthetase subfamily. Homodimer. The tRNA molecule binds across the dimer.

The protein resides in the cytoplasm. It carries out the reaction tRNA(Ser) + L-serine + ATP = L-seryl-tRNA(Ser) + AMP + diphosphate + H(+). It catalyses the reaction tRNA(Sec) + L-serine + ATP = L-seryl-tRNA(Sec) + AMP + diphosphate + H(+). Its pathway is aminoacyl-tRNA biosynthesis; selenocysteinyl-tRNA(Sec) biosynthesis; L-seryl-tRNA(Sec) from L-serine and tRNA(Sec): step 1/1. In terms of biological role, catalyzes the attachment of serine to tRNA(Ser). Is also able to aminoacylate tRNA(Sec) with serine, to form the misacylated tRNA L-seryl-tRNA(Sec), which will be further converted into selenocysteinyl-tRNA(Sec). The sequence is that of Serine--tRNA ligase from Acinetobacter baylyi (strain ATCC 33305 / BD413 / ADP1).